The following is a 91-amino-acid chain: C-C motif chemokine 5 (91 aa).

Residues 1–23 (MKVSAARLAVILVATALCAPASA) form the signal peptide. Disulfide bonds link Cys33/Cys57 and Cys34/Cys73.

Belongs to the intercrine beta (chemokine CC) family.

Its subcellular location is the secreted. Its function is as follows. Chemoattractant for blood monocytes, memory T-helper cells and eosinophils. Causes the release of histamine from basophils and activates eosinophils. May activate several chemokine receptors including CCR1, CCR3, CCR4 and CCR5. May also be an agonist of the G protein-coupled receptor GPR75. Together with GPR75, may play a role in neuron survival through activation of a downstream signaling pathway involving the PI3, Akt and MAP kinases. By activating GPR75 may also play a role in insulin secretion by islet cells. This is C-C motif chemokine 5 (CCL5) from Macaca mulatta (Rhesus macaque).